The sequence spans 442 residues: Hydroxycinnamoyltransferase 1 (442 aa).

Active-site proton acceptor residues include His-159 and Asp-389.

This sequence belongs to the plant acyltransferase family. Expressed in roots, leaves, stems and seeds.

Functionally, hydroxycinnamoyl transferase that catalyzes the transfer of an acyl from p-coumaryol-CoA to various acyl acceptors. Can use feruloyl-CoA and caffeoyl-CoA as acyl donors. In Oryza sativa subsp. japonica (Rice), this protein is Hydroxycinnamoyltransferase 1.